A 303-amino-acid chain; its full sequence is D-alanine--D-alanine ligase (303 aa).

Residues Lys-104 to Glu-300 enclose the ATP-grasp domain. An ATP-binding site is contributed by Ile-132 to Ser-187. Residues Asp-254, Glu-267, and Asn-269 each contribute to the Mg(2+) site.

This sequence belongs to the D-alanine--D-alanine ligase family. Mg(2+) serves as cofactor. The cofactor is Mn(2+).

It localises to the cytoplasm. The catalysed reaction is 2 D-alanine + ATP = D-alanyl-D-alanine + ADP + phosphate + H(+). Its pathway is cell wall biogenesis; peptidoglycan biosynthesis. Functionally, cell wall formation. The polypeptide is D-alanine--D-alanine ligase (Glaesserella parasuis serovar 5 (strain SH0165) (Haemophilus parasuis)).